The primary structure comprises 294 residues: Pyridoxal 5'-phosphate synthase subunit PdxS (294 aa).

D24 is a binding site for D-ribose 5-phosphate. Residue K81 is the Schiff-base intermediate with D-ribose 5-phosphate of the active site. A D-ribose 5-phosphate-binding site is contributed by G153. Residue R165 participates in D-glyceraldehyde 3-phosphate binding. Residues G214 and 235 to 236 (GS) each bind D-ribose 5-phosphate.

The protein belongs to the PdxS/SNZ family. Homohexamer and homododecamer. In the presence of PdxT, forms a dodecamer of heterodimers.

The enzyme catalyses aldehydo-D-ribose 5-phosphate + D-glyceraldehyde 3-phosphate + L-glutamine = pyridoxal 5'-phosphate + L-glutamate + phosphate + 3 H2O + H(+). Its pathway is cofactor biosynthesis; pyridoxal 5'-phosphate biosynthesis. Its function is as follows. Catalyzes the formation of pyridoxal 5'-phosphate from ribose 5-phosphate (RBP), glyceraldehyde 3-phosphate (G3P) and ammonia. The ammonia is provided by the PdxT subunit. Can also use ribulose 5-phosphate and dihydroxyacetone phosphate as substrates, resulting from enzyme-catalyzed isomerization of RBP and G3P, respectively. The sequence is that of Pyridoxal 5'-phosphate synthase subunit PdxS from Bacillus subtilis (strain 168).